The following is a 633-amino-acid chain: Threonine--tRNA ligase (633 aa).

The 61-residue stretch at 1–61 folds into the TGS domain; that stretch reads MINIHFSNNL…IENCTFEVIT (61 aa). The interval 242-533 is catalytic; sequence DHRKIGRELE…LIEHHSGKFP (292 aa). Zn(2+) is bound by residues cysteine 333, histidine 384, and histidine 510.

The protein belongs to the class-II aminoacyl-tRNA synthetase family. As to quaternary structure, homodimer. Zn(2+) is required as a cofactor.

The protein localises to the cytoplasm. It carries out the reaction tRNA(Thr) + L-threonine + ATP = L-threonyl-tRNA(Thr) + AMP + diphosphate + H(+). Its function is as follows. Catalyzes the attachment of threonine to tRNA(Thr) in a two-step reaction: L-threonine is first activated by ATP to form Thr-AMP and then transferred to the acceptor end of tRNA(Thr). Also edits incorrectly charged L-seryl-tRNA(Thr). This is Threonine--tRNA ligase from Ehrlichia chaffeensis (strain ATCC CRL-10679 / Arkansas).